Consider the following 366-residue polypeptide: Ribosomal RNA large subunit methyltransferase M (366 aa).

Residues Ser188, 221-224 (CPGG), Asp240, Asp260, and Asp277 each bind S-adenosyl-L-methionine. Residue Lys306 is the Proton acceptor of the active site.

The protein belongs to the class I-like SAM-binding methyltransferase superfamily. RNA methyltransferase RlmE family. RlmM subfamily. As to quaternary structure, monomer.

It is found in the cytoplasm. The enzyme catalyses cytidine(2498) in 23S rRNA + S-adenosyl-L-methionine = 2'-O-methylcytidine(2498) in 23S rRNA + S-adenosyl-L-homocysteine + H(+). In terms of biological role, catalyzes the 2'-O-methylation at nucleotide C2498 in 23S rRNA. This chain is Ribosomal RNA large subunit methyltransferase M, found in Klebsiella pneumoniae subsp. pneumoniae (strain ATCC 700721 / MGH 78578).